Here is a 776-residue protein sequence, read N- to C-terminus: Protein translocase subunit SecA 2 (776 aa).

ATP contacts are provided by residues Gln80, 98–102 (GEGKT), and Asp486.

This sequence belongs to the SecA family. As to quaternary structure, monomer and homodimer. Part of the essential Sec protein translocation apparatus which comprises SecA, SecYEG and auxiliary proteins SecDF. Other proteins may also be involved.

Its subcellular location is the cell membrane. The protein resides in the cytoplasm. It carries out the reaction ATP + H2O + cellular proteinSide 1 = ADP + phosphate + cellular proteinSide 2.. Functionally, part of the Sec protein translocase complex. Interacts with the SecYEG preprotein conducting channel. Has a central role in coupling the hydrolysis of ATP to the transfer of proteins into and across the cell membrane, serving as an ATP-driven molecular motor driving the stepwise translocation of polypeptide chains across the membrane. In Listeria monocytogenes serovar 1/2a (strain ATCC BAA-679 / EGD-e), this protein is Protein translocase subunit SecA 2.